A 504-amino-acid polypeptide reads, in one-letter code: Glucose-6-phosphate isomerase (504 aa).

Glu333 acts as the Proton donor in catalysis. Residues His364 and Lys473 contribute to the active site.

It belongs to the GPI family.

It is found in the cytoplasm. It catalyses the reaction alpha-D-glucose 6-phosphate = beta-D-fructose 6-phosphate. It participates in carbohydrate biosynthesis; gluconeogenesis. It functions in the pathway carbohydrate degradation; glycolysis; D-glyceraldehyde 3-phosphate and glycerone phosphate from D-glucose: step 2/4. Its function is as follows. Catalyzes the reversible isomerization of glucose-6-phosphate to fructose-6-phosphate. The protein is Glucose-6-phosphate isomerase of Stenotrophomonas maltophilia (strain K279a).